Consider the following 625-residue polypeptide: Mitochondrial Rho GTPase 1 (625 aa).

At 1-601 the chain is on the cytoplasmic side; sequence MSDDETLADV…LRRVFYLNDS (601 aa). In terms of domain architecture, Miro 1 spans 3-170; the sequence is DDETLADVRI…EIFYYAQKAV (168 aa). GTP is bound by residues 16–23, 62–66, and 123–126; these read GDEGCGKT, DLSIK, and NKSD. 2 consecutive EF-hand domains span residues 188–223 and 308–343; these read RARK…CFGI and EGVQ…CPVP. Ca(2+) contacts are provided by aspartate 201, aspartate 203, aspartate 205, tyrosine 207, glutamate 212, aspartate 321, aspartate 323, aspartate 325, cysteine 327, and glutamate 332. In terms of domain architecture, Miro 2 spans 420-625; sequence HGTDRKVFQC…LAGFLVLKNL (206 aa). Residues 433 to 440, 470 to 474, and 537 to 540 each bind GTP; these read GAKDAGKT, RVKEE, and TKVE. The chain crosses the membrane as a helical; Anchor for type IV membrane protein span at residues 602-622; that stretch reads NLLSKITFGAAIVALAGFLVL. Over 623–625 the chain is Mitochondrial intermembrane; that stretch reads KNL.

Belongs to the mitochondrial Rho GTPase family.

It localises to the mitochondrion outer membrane. In terms of biological role, mitochondrial GTPase involved in mitochondrial trafficking. Probably involved in control of anterograde transport of mitochondria and their subcellular distribution. Plays a role in maintaining mitochondrial morphology. The sequence is that of Mitochondrial Rho GTPase 1 from Caenorhabditis elegans.